A 1004-amino-acid polypeptide reads, in one-letter code: MAKGKQKKGKDLNELKKELDIDFHKIPIEECYQRLGSNPETGLTNAQARSNIERDGPNCLTPPKTTPEWIKFCKNLFGGFALLLWTGAILCFLAYGIEASSGNEDMLKDNLYLGIVLATVVIVTGIFSYYQENKSSRIMDSFKNLVPQYALALREGQRVTLKAEELTMGDIVEVKFGDRVPADLRVLEARSFKVDNSSLTGESEPQARSPEFTNDNPLETKNLAFFSTNAVEGTMRGIVIGIGDNTVMGRIAGLASGLDTGETPIAKEIAHFIHIITGVAVFLGVTFFIIAFVLGYHWLDAVVFLIGIIVANVPEGLLATVTVCLTLTAKRMASKNCLVKNLEAVETLGSTSTICSDKTGTLTQNRMTVAHMWFDGTITEADTTEDQSGAQFDKSSAGWKALVKIAALCSRAEFKPNQSTTPILKREVTGDASEAAILKCVELTTGETEAIRKRNKKICEIPFNSANKFQVSIHENEDKSDGRYLLVMKGAPERILERCSTIFMNGKEIDMTEELKEAFNNAYMELGGLGERVLGFCDYLLPLDKYPHGFAFNADDANFPLTGLRFAGLMSMIDPPRAAVPDAVAKCRSAGIKVIMVTGDHPITAKAIAKSVGIISEGNETVEDIAARLNIPVSEVNPRDAKAAVVHGGELRDITPDALDEILRHHPEIVFARTSPQQKLIIVEGCQRQGAIVAVTGDGVNDSPALKKADIGVAMGIAGSDVSKQAADMILLDDNFASIVTGVEEGRLIFDNLKKSIVYTLTSNIPEISPFLLFILFDIPLPLGTVTILCIDLGTDMVPAISLAYEEAESDIMKRRPRNPVTDKLVNERLISLAYGQIGMIQASAGFFVYFVIMAECGFLPWDLFGLRKHWDSRAVNDLTDSYGQEWTYDARKQLESSCHTAYFVSIVIVQWADLIISKTRRNSVFQQGMRNNILNFALVFETCLAAFLSYTPGMDKGLRMYPLKINWWFPALPFSFLIFVYDEARKFILRRNPGGWVEQETYY.

Transmembrane regions (helical) follow at residues 76-96 (LFGG…LAYG) and 110-126 (NLYL…VTGI). The interval 197–216 (SSLTGESEPQARSPEFTNDN) is disordered. Helical transmembrane passes span 272–294 (FIHI…AFVL) and 301–329 (AVVF…TLTA). Asp357 acts as the 4-aspartylphosphate intermediate in catalysis. An ATP-binding site is contributed by Lys489. Mg(2+)-binding residues include Asp698 and Asp702. Transmembrane regions (helical) follow at residues 768–791 (ISPF…ILCI), 828–855 (ERLI…VIMA), 897–918 (SSCH…LIIS), and 934–959 (ILNF…DKGL).

The protein belongs to the cation transport ATPase (P-type) (TC 3.A.3) family. Type IIC subfamily. As to quaternary structure, the sodium/potassium-transporting ATPase is composed of a catalytic alpha subunit, an auxiliary non-catalytic beta subunit and an additional regulatory subunit.

Its subcellular location is the cell membrane. The enzyme catalyses K(+)(out) + Na(+)(in) + ATP + H2O = K(+)(in) + Na(+)(out) + ADP + phosphate + H(+). This is the catalytic component of the active enzyme, which catalyzes the hydrolysis of ATP coupled with the exchange of sodium and potassium ions across the plasma membrane. This action creates the electrochemical gradient of sodium and potassium ions, providing the energy for active transport of various nutrients. The chain is Sodium/potassium-transporting ATPase subunit alpha-B from Artemia franciscana (Brine shrimp).